The following is a 462-amino-acid chain: Chromosomal replication initiator protein DnaA (462 aa).

A domain I, interacts with DnaA modulators region spans residues 1–84 (MAVSLWQQCI…RFDIGSRPSA (84 aa)). Positions 84–125 (APKPIQATAAVVKPKLESSPQKSQTSFNVNAPEPAATANHRS) are domain II. The domain III, AAA+ region stretch occupies residues 126-342 (NINPTYQFEN…GALNRVIANA (217 aa)). ATP-binding residues include Gly170, Gly172, Lys173, and Thr174. Residues 343–462 (NFTGRPITID…YANLIRTLSS (120 aa)) form a domain IV, binds dsDNA region.

The protein belongs to the DnaA family. In terms of assembly, oligomerizes as a right-handed, spiral filament on DNA at oriC.

Its subcellular location is the cytoplasm. Its function is as follows. Plays an essential role in the initiation and regulation of chromosomal replication. ATP-DnaA binds to the origin of replication (oriC) to initiate formation of the DNA replication initiation complex once per cell cycle. Binds the DnaA box (a 9 base pair repeat at the origin) and separates the double-stranded (ds)DNA. Forms a right-handed helical filament on oriC DNA; dsDNA binds to the exterior of the filament while single-stranded (ss)DNA is stabiized in the filament's interior. The ATP-DnaA-oriC complex binds and stabilizes one strand of the AT-rich DNA unwinding element (DUE), permitting loading of DNA polymerase. After initiation quickly degrades to an ADP-DnaA complex that is not apt for DNA replication. Binds acidic phospholipids. The sequence is that of Chromosomal replication initiator protein DnaA from Shewanella woodyi (strain ATCC 51908 / MS32).